An 89-amino-acid polypeptide reads, in one-letter code: UPF0335 protein Caul_0876 (89 aa).

Belongs to the UPF0335 family.

The protein is UPF0335 protein Caul_0876 of Caulobacter sp. (strain K31).